The primary structure comprises 217 residues: Grancalcin (217 aa).

EF-hand domains are found at residues 48 to 83 (SSAGDSVYTYFSAVAGQDGEVDAEELQRCLTQSGIN), 89 to 122 (FSLETCRIMIAMLDRDHTGKMGFNAFKELWAALN), 119 to 154 (AALNAWKENFMTVDQDGSGTVEHHELRQAIGLMGYR), and 155 to 180 (LSPQTLTTIVKRYSKNGRIFFDDYVA). Ca(2+) is bound by residues Asp-65, Asp-69, and Glu-71. The Ca(2+) site is built by Asp-132, Asp-134, Ser-136, Thr-138, and Glu-143.

In terms of assembly, homodimer. Interacts with SRI and LCP1. As to expression, detected in neutrophils and macrophages (at protein level). Highly expressed in bone marrow.

The protein resides in the cytoplasm. The protein localises to the cytoplasmic granule membrane. Its function is as follows. Calcium-binding protein that may play a role in the adhesion of neutrophils to fibronectin. May play a role in the formation of focal adhesions. The polypeptide is Grancalcin (GCA) (Homo sapiens (Human)).